The following is a 322-amino-acid chain: Pantothenate kinase (322 aa).

Residue 100–107 (GSVAVGKS) coordinates ATP.

The protein belongs to the prokaryotic pantothenate kinase family.

The protein resides in the cytoplasm. It catalyses the reaction (R)-pantothenate + ATP = (R)-4'-phosphopantothenate + ADP + H(+). It participates in cofactor biosynthesis; coenzyme A biosynthesis; CoA from (R)-pantothenate: step 1/5. In Brucella abortus (strain 2308), this protein is Pantothenate kinase.